The primary structure comprises 425 residues: D-arabinitol transporter (425 aa).

The Cytoplasmic portion of the chain corresponds to 1–7 (MSINNKQ). The helical transmembrane segment at 8–28 (WLGLPLNLLWGYIAIAVFMTG) threads the bilayer. Residues 29–51 (DGFELAFLSHYIKALGFSPAEAS) are Extracellular-facing. The chain crosses the membrane as a helical span at residues 52–72 (FAFTLYGLAAALSAWISGVVA). The Cytoplasmic portion of the chain corresponds to 73–80 (EIITPLKT). A helical membrane pass occupies residues 81–101 (MMIGFVLWCVFHVLFLVFGLG). At 102–107 (HANYAL) the chain is on the extracellular side. A helical transmembrane segment spans residues 108 to 128 (ILLFYGIRGFAYPLFLYSFIV). Residues 129–141 (AIVHNVKSDNASS) are Cytoplasmic-facing. The helical transmembrane segment at 142–162 (AIGWFWAVYSIGIGVFGSYIP) threads the bilayer. The Extracellular segment spans residues 163-172 (SFTIPHIGEM). The helical transmembrane segment at 173–193 (GTLWLALAFCLTGGVIALVSL) threads the bilayer. Over 194-237 (RHIQTPQHMQNLTTREKFSELGRAATLLYTNRNILLSSMVRIIN) the chain is Cytoplasmic. Residues 238–258 (TLSLFGFAVIMPMMFVDELGF) traverse the membrane as a helical segment. At 259-263 (STSEW) the chain is on the extracellular side. Residues 264-284 (LQVWAVFFFTTIFSNVLWGIL) traverse the membrane as a helical segment. At 285-295 (GEKLGWMKVVR) the chain is on the cytoplasmic side. The chain crosses the membrane as a helical span at residues 296 to 316 (WFGCIGMALSSLAFYYIPQHF). Residues 317–323 (GHSFAMA) lie on the Extracellular side of the membrane. The chain crosses the membrane as a helical span at residues 324–344 (LIPAIALGIFVAAFVPLAAVF). Topologically, residues 345–360 (PALEPKHKGAAISVYN) are cytoplasmic. A helical transmembrane segment spans residues 361–381 (LSAGMSNFLAPAIAVVLLPFF). Residues 382–383 (ST) lie on the Extracellular side of the membrane. Residues 384–404 (IGVVIAYTALYVVAFFLCAFI) form a helical membrane-spanning segment. Topologically, residues 405 to 425 (RVEQPGFSHKEATAREQVEFS) are cytoplasmic.

The protein belongs to the major facilitator superfamily. Sugar transporter (TC 2.A.1.1) family. CsbX subfamily.

Its subcellular location is the cell membrane. This Klebsiella pneumoniae protein is D-arabinitol transporter (dalT).